A 128-amino-acid polypeptide reads, in one-letter code: MDSFVQKYTNGFKSILNKVEKTDFATIKSEFQYNQANLEWVESKVSDLNNYLLDPNQFSDVVSFKKIANEKLDLFVKNHGNKLPFFLFTSFVLAIFSFVSVYVRHHYDLDFNDPDAIISFFRELAFHE.

This is an uncharacterized protein from Mycoplasma genitalium (strain ATCC 33530 / DSM 19775 / NCTC 10195 / G37) (Mycoplasmoides genitalium).